Reading from the N-terminus, the 541-residue chain is Phosphatidylethanolamine transferase Mcr-1 (541 aa).

The Cytoplasmic segment spans residues 1 to 14; it reads MMQHTSVWYRRSVS. A helical membrane pass occupies residues 15 to 35; it reads PFVLVASVAVFLTATANLTFF. At 36 to 47 the chain is on the periplasmic side; the sequence is DKISQTYPIADN. A helical transmembrane segment spans residues 48 to 68; sequence LGFVLTIAVVLFGAMLLITTL. Residues 69–73 lie on the Cytoplasmic side of the membrane; sequence LSSYR. Residues 74 to 94 traverse the membrane as a helical segment; sequence YVLKPVLILLLIMGAVTSYFT. Topologically, residues 95–122 are periplasmic; it reads DTYGTVYDTTMLQNALQTDQAETKDLLN. The helical transmembrane segment at 123–143 threads the bilayer; that stretch reads AAFIMRIIGLGVLPSLLVAFV. The Cytoplasmic portion of the chain corresponds to 144–157; that stretch reads KVDYPTWGKGLMRR. Residues 158–178 form a helical membrane-spanning segment; the sequence is LGLIVASLALILLPVVAFSSH. The Periplasmic segment spans residues 179-541; it reads YASFFRVHKP…KVKDRTAFIR (363 aa). Zn(2+) contacts are provided by Glu246 and Thr285. 3 cysteine pairs are disulfide-bonded: Cys281–Cys291, Cys356–Cys364, and Cys414–Cys422. A Phosphothreonine modification is found at Thr285. Residues Asp465 and His466 each contribute to the Zn(2+) site.

The protein belongs to the phosphoethanolamine transferase family. In terms of assembly, monomer. Post-translationally, phosphorylated at Thr-285; may represent an intermediate in the catalytic mechanism.

It localises to the cell inner membrane. It catalyses the reaction lipid A (E. coli) + a 1,2-diacyl-sn-glycero-3-phosphoethanolamine + H(+) = lipid A 4'-(2-aminoethyl diphosphate) (E. coli) + a 1,2-diacyl-sn-glycerol. With respect to regulation, EDTA may inhibit activity. May be inhibited by ethanolamine. Functionally, probably catalyzes the addition of a phosphoethanolamine moiety to lipid A. Phosphoethanolamine modification of lipid A confers polymyxin resistance. Confers resistance to polymyxin-type antibiotics such as colistin; in the E.coli strain W3110. This chain is Phosphatidylethanolamine transferase Mcr-1 (mcr1), found in Escherichia coli.